The chain runs to 482 residues: Glycogen synthase (482 aa).

Residue Lys21 participates in ADP-alpha-D-glucose binding.

This sequence belongs to the glycosyltransferase 1 family. Bacterial/plant glycogen synthase subfamily.

It catalyses the reaction [(1-&gt;4)-alpha-D-glucosyl](n) + ADP-alpha-D-glucose = [(1-&gt;4)-alpha-D-glucosyl](n+1) + ADP + H(+). Its pathway is glycan biosynthesis; glycogen biosynthesis. In terms of biological role, synthesizes alpha-1,4-glucan chains using ADP-glucose. This is Glycogen synthase from Clostridium perfringens (strain 13 / Type A).